Reading from the N-terminus, the 283-residue chain is Formamidopyrimidine-DNA glycosylase (283 aa).

Pro2 (schiff-base intermediate with DNA) is an active-site residue. The Proton donor role is filled by Glu3. Lys60 (proton donor; for beta-elimination activity) is an active-site residue. Positions 100, 119, and 164 each coordinate DNA. Residues 249 to 283 form an FPG-type zinc finger; that stretch reads WVYGRENKPCRKCGVKILKAKVAGRGTHWCPNCQK. Arg273 functions as the Proton donor; for delta-elimination activity in the catalytic mechanism.

This sequence belongs to the FPG family. As to quaternary structure, monomer. It depends on Zn(2+) as a cofactor.

It carries out the reaction Hydrolysis of DNA containing ring-opened 7-methylguanine residues, releasing 2,6-diamino-4-hydroxy-5-(N-methyl)formamidopyrimidine.. The catalysed reaction is 2'-deoxyribonucleotide-(2'-deoxyribose 5'-phosphate)-2'-deoxyribonucleotide-DNA = a 3'-end 2'-deoxyribonucleotide-(2,3-dehydro-2,3-deoxyribose 5'-phosphate)-DNA + a 5'-end 5'-phospho-2'-deoxyribonucleoside-DNA + H(+). In terms of biological role, involved in base excision repair of DNA damaged by oxidation or by mutagenic agents. Acts as a DNA glycosylase that recognizes and removes damaged bases. Has a preference for oxidized purines, such as 7,8-dihydro-8-oxoguanine (8-oxoG). Has AP (apurinic/apyrimidinic) lyase activity and introduces nicks in the DNA strand. Cleaves the DNA backbone by beta-delta elimination to generate a single-strand break at the site of the removed base with both 3'- and 5'-phosphates. The protein is Formamidopyrimidine-DNA glycosylase of Prochlorococcus marinus (strain SARG / CCMP1375 / SS120).